A 392-amino-acid polypeptide reads, in one-letter code: uncharacterized protein (392 aa).

The transit peptide at 1–34 directs the protein to the mitochondrion; the sequence is MCISSSSLLCGINSLKYASNRVGILIPPFQTASS. The next 8 membrane-spanning stretches (helical) occupy residues 115–135, 150–172, 185–205, 208–225, 277–297, 299–319, 321–341, and 350–370; these read VAIMVAVIVCLVNGVVFWHWD, FRFMMTHAQASLFNLYEGRWWTL, LLVNCVAIYSFLSIVVYKFGV, ALSVYLGAGVFGNYVALQ, ATFVPQSWATGLLGASGAVYA, AAIFACLFPYTEFFLFFVYPV, AGIFMPLDFIAEYVLCLLNYE, and AHVSGTFFGVVSSLFLLPAMW. Serine 292 functions as the Nucleophile in the catalytic mechanism. Residue histidine 351 is part of the active site.

Belongs to the peptidase S54 family.

It is found in the mitochondrion inner membrane. This is an uncharacterized protein from Schizosaccharomyces pombe (strain 972 / ATCC 24843) (Fission yeast).